The sequence spans 227 residues: Cytochrome c oxidase subunit 2 (227 aa).

The Mitochondrial intermembrane segment spans residues 1–14 (MAYPFQLGLQDATS). The chain crosses the membrane as a helical span at residues 15–45 (PIMEELMNFHDHTLMIVFLISSLVLYIISLM). Topologically, residues 46–59 (LTTKLTHTSTMDAQ) are mitochondrial matrix. A helical membrane pass occupies residues 60 to 87 (EVETIWTILPAAILILIALPSLRILYMM). Residues 88–227 (DEINNPVLTV…YFENWSASMI (140 aa)) lie on the Mitochondrial intermembrane side of the membrane. Residues histidine 161, cysteine 196, glutamate 198, cysteine 200, histidine 204, and methionine 207 each coordinate Cu cation. Glutamate 198 is a Mg(2+) binding site. A Phosphotyrosine modification is found at tyrosine 218.

It belongs to the cytochrome c oxidase subunit 2 family. Component of the cytochrome c oxidase (complex IV, CIV), a multisubunit enzyme composed of 14 subunits. The complex is composed of a catalytic core of 3 subunits MT-CO1, MT-CO2 and MT-CO3, encoded in the mitochondrial DNA, and 11 supernumerary subunits COX4I, COX5A, COX5B, COX6A, COX6B, COX6C, COX7A, COX7B, COX7C, COX8 and NDUFA4, which are encoded in the nuclear genome. The complex exists as a monomer or a dimer and forms supercomplexes (SCs) in the inner mitochondrial membrane with NADH-ubiquinone oxidoreductase (complex I, CI) and ubiquinol-cytochrome c oxidoreductase (cytochrome b-c1 complex, complex III, CIII), resulting in different assemblies (supercomplex SCI(1)III(2)IV(1) and megacomplex MCI(2)III(2)IV(2)). Found in a complex with TMEM177, COA6, COX18, COX20, SCO1 and SCO2. Interacts with TMEM177 in a COX20-dependent manner. Interacts with COX20. Interacts with COX16. Requires Cu cation as cofactor.

The protein resides in the mitochondrion inner membrane. The enzyme catalyses 4 Fe(II)-[cytochrome c] + O2 + 8 H(+)(in) = 4 Fe(III)-[cytochrome c] + 2 H2O + 4 H(+)(out). Its function is as follows. Component of the cytochrome c oxidase, the last enzyme in the mitochondrial electron transport chain which drives oxidative phosphorylation. The respiratory chain contains 3 multisubunit complexes succinate dehydrogenase (complex II, CII), ubiquinol-cytochrome c oxidoreductase (cytochrome b-c1 complex, complex III, CIII) and cytochrome c oxidase (complex IV, CIV), that cooperate to transfer electrons derived from NADH and succinate to molecular oxygen, creating an electrochemical gradient over the inner membrane that drives transmembrane transport and the ATP synthase. Cytochrome c oxidase is the component of the respiratory chain that catalyzes the reduction of oxygen to water. Electrons originating from reduced cytochrome c in the intermembrane space (IMS) are transferred via the dinuclear copper A center (CU(A)) of subunit 2 and heme A of subunit 1 to the active site in subunit 1, a binuclear center (BNC) formed by heme A3 and copper B (CU(B)). The BNC reduces molecular oxygen to 2 water molecules using 4 electrons from cytochrome c in the IMS and 4 protons from the mitochondrial matrix. The polypeptide is Cytochrome c oxidase subunit 2 (MT-CO2) (Praomys tullbergi (Tullberg's soft-furred rat)).